Consider the following 1219-residue polypeptide: Pleckstrin homology domain-containing family G member 3 (1219 aa).

Residues 1-10 (MPVSTSLHQD) show a composition bias toward polar residues. The interval 1–66 (MPVSTSLHQD…HLPNSNNNSS (66 aa)) is disordered. Residues 18–46 (SLTSTTSSSGSSCDSRSAMEEPSSSEAPA) are compositionally biased toward low complexity. At Ser76 the chain carries Phosphoserine. The DH domain occupies 93 to 272 (YLGRVVREIV…TCVAWYINDM (180 aa)). The 99-residue stretch at 296–394 (DLTTYGELVL…WTHHIKRLIL (99 aa)) folds into the PH domain. Residues 431–442 (WSSQDEVSTNVR) are compositionally biased toward polar residues. Disordered regions lie at residues 431-599 (WSSQ…PSVL) and 613-708 (FSRR…KESA). Ser433 is subject to Phosphoserine. Residues 446-463 (RQSEPTKHLLRQLNEKAR) are compositionally biased toward basic and acidic residues. Phosphoserine is present on residues Ser576, Ser577, Ser618, Ser631, Ser640, Ser643, and Ser647. Over residues 630–645 (GSPRLVSRSSSVLSLE) the composition is skewed to low complexity. Positions 696–708 (EPDRSSCKKKESA) are enriched in basic and acidic residues. A phosphoserine mark is found at Ser741, Ser779, and Ser827. Disordered regions lie at residues 756 to 780 (RFNSLPRPDPEPVPPVGSKRQVGSR), 821 to 840 (MESSGGSPGKGPGQGQANGF), 859 to 878 (EESATASPESSSPTEGRSPA), 955 to 1133 (APER…LYVT), and 1146 to 1207 (VMEK…RVRN). Residues 826–836 (GSPGKGPGQGQ) show a composition bias toward gly residues. The span at 859-873 (EESATASPESSSPTE) shows a compositional bias: low complexity. Phosphoserine occurs at positions 962, 1011, 1023, 1037, and 1040. A compositionally biased stretch (polar residues) spans 1020-1029 (SAVSQRTTSP). A compositionally biased stretch (basic and acidic residues) spans 1049–1065 (DVRELCSKYASRDEARR). A Phosphoserine modification is found at Ser1081. Arg1107 bears the Omega-N-methylarginine mark. Positions 1187-1197 (QPKEEGSRDPA) are enriched in basic and acidic residues.

It is found in the cytoplasm. The protein resides in the cytoskeleton. Functionally, plays a role in controlling cell polarity and cell motility by selectively binding newly polymerized actin and activating RAC1 and CDC42 to enhance local actin polymerization. This Homo sapiens (Human) protein is Pleckstrin homology domain-containing family G member 3.